A 38-amino-acid polypeptide reads, in one-letter code: Photosystem II reaction center protein T (38 aa).

The chain crosses the membrane as a helical span at residues 3 to 23 (ALVYTFLLVSTLGIIFFAIFF).

Belongs to the PsbT family. In terms of assembly, PSII is composed of 1 copy each of membrane proteins PsbA, PsbB, PsbC, PsbD, PsbE, PsbF, PsbH, PsbI, PsbJ, PsbK, PsbL, PsbM, PsbT, PsbY, PsbZ, Psb30/Ycf12, at least 3 peripheral proteins of the oxygen-evolving complex and a large number of cofactors. It forms dimeric complexes.

Its subcellular location is the plastid. It is found in the chloroplast thylakoid membrane. Its function is as follows. Found at the monomer-monomer interface of the photosystem II (PS II) dimer, plays a role in assembly and dimerization of PSII. PSII is a light-driven water plastoquinone oxidoreductase, using light energy to abstract electrons from H(2)O, generating a proton gradient subsequently used for ATP formation. The protein is Photosystem II reaction center protein T of Secale cereale (Rye).